We begin with the raw amino-acid sequence, 247 residues long: 1-(5-phosphoribosyl)-5-[(5-phosphoribosylamino)methylideneamino] imidazole-4-carboxamide isomerase (247 aa).

Aspartate 8 acts as the Proton acceptor in catalysis. The Proton donor role is filled by aspartate 129.

The protein belongs to the HisA/HisF family.

The protein resides in the cytoplasm. It catalyses the reaction 1-(5-phospho-beta-D-ribosyl)-5-[(5-phospho-beta-D-ribosylamino)methylideneamino]imidazole-4-carboxamide = 5-[(5-phospho-1-deoxy-D-ribulos-1-ylimino)methylamino]-1-(5-phospho-beta-D-ribosyl)imidazole-4-carboxamide. The protein operates within amino-acid biosynthesis; L-histidine biosynthesis; L-histidine from 5-phospho-alpha-D-ribose 1-diphosphate: step 4/9. The sequence is that of 1-(5-phosphoribosyl)-5-[(5-phosphoribosylamino)methylideneamino] imidazole-4-carboxamide isomerase from Bradyrhizobium sp. (strain BTAi1 / ATCC BAA-1182).